The sequence spans 191 residues: uncharacterized protein (191 aa).

This is an uncharacterized protein from Arabidopsis thaliana (Mouse-ear cress).